The following is a 506-amino-acid chain: Maturase K (506 aa).

It belongs to the intron maturase 2 family. MatK subfamily.

The protein resides in the plastid. It is found in the chloroplast. Functionally, usually encoded in the trnK tRNA gene intron. Probably assists in splicing its own and other chloroplast group II introns. The sequence is that of Maturase K from Carica papaya (Papaya).